The following is a 660-amino-acid chain: Protein translocase subunit SecA 2 (660 aa).

Residues Q113, 131 to 135 (GEGKT), and D539 contribute to the ATP site.

It belongs to the SecA family. Monomer and homodimer. Part of the essential Sec protein translocation apparatus which comprises SecA, SecYEG and auxiliary proteins SecDF-YajC and YidC.

It is found in the cell inner membrane. Its subcellular location is the cytoplasm. The catalysed reaction is ATP + H2O + cellular proteinSide 1 = ADP + phosphate + cellular proteinSide 2.. In terms of biological role, part of the Sec protein translocase complex. Interacts with the SecYEG preprotein conducting channel. Has a central role in coupling the hydrolysis of ATP to the transfer of proteins into and across the cell membrane, serving both as a receptor for the preprotein-SecB complex and as an ATP-driven molecular motor driving the stepwise translocation of polypeptide chains across the membrane. This Bordetella avium (strain 197N) protein is Protein translocase subunit SecA 2.